Reading from the N-terminus, the 174-residue chain is NADH-ubiquinone oxidoreductase chain 6 (174 aa).

6 helical membrane passes run 1 to 21 (MTYA…GFSS), 24 to 44 (SPIY…AVIL), 47 to 67 (GGGY…MVVF), 86 to 106 (AEVL…VLWV), 111 to 131 (GVVV…EGEG), and 151 to 171 (WLVV…IEIA).

It belongs to the complex I subunit 6 family. As to quaternary structure, core subunit of respiratory chain NADH dehydrogenase (Complex I) which is composed of 45 different subunits.

It is found in the mitochondrion inner membrane. The catalysed reaction is a ubiquinone + NADH + 5 H(+)(in) = a ubiquinol + NAD(+) + 4 H(+)(out). Functionally, core subunit of the mitochondrial membrane respiratory chain NADH dehydrogenase (Complex I) which catalyzes electron transfer from NADH through the respiratory chain, using ubiquinone as an electron acceptor. Essential for the catalytic activity and assembly of complex I. The chain is NADH-ubiquinone oxidoreductase chain 6 (MT-ND6) from Pongo pygmaeus (Bornean orangutan).